Reading from the N-terminus, the 75-residue chain is Exodeoxyribonuclease 7 small subunit (75 aa).

Belongs to the XseB family. Heterooligomer composed of large and small subunits.

The protein localises to the cytoplasm. The enzyme catalyses Exonucleolytic cleavage in either 5'- to 3'- or 3'- to 5'-direction to yield nucleoside 5'-phosphates.. Its function is as follows. Bidirectionally degrades single-stranded DNA into large acid-insoluble oligonucleotides, which are then degraded further into small acid-soluble oligonucleotides. In Pelobacter propionicus (strain DSM 2379 / NBRC 103807 / OttBd1), this protein is Exodeoxyribonuclease 7 small subunit.